The sequence spans 255 residues: Imidazole glycerol phosphate synthase subunit HisF (255 aa).

Residues Asp-11 and Asp-130 contribute to the active site.

The protein belongs to the HisA/HisF family. In terms of assembly, heterodimer of HisH and HisF.

It localises to the cytoplasm. It catalyses the reaction 5-[(5-phospho-1-deoxy-D-ribulos-1-ylimino)methylamino]-1-(5-phospho-beta-D-ribosyl)imidazole-4-carboxamide + L-glutamine = D-erythro-1-(imidazol-4-yl)glycerol 3-phosphate + 5-amino-1-(5-phospho-beta-D-ribosyl)imidazole-4-carboxamide + L-glutamate + H(+). Its pathway is amino-acid biosynthesis; L-histidine biosynthesis; L-histidine from 5-phospho-alpha-D-ribose 1-diphosphate: step 5/9. IGPS catalyzes the conversion of PRFAR and glutamine to IGP, AICAR and glutamate. The HisF subunit catalyzes the cyclization activity that produces IGP and AICAR from PRFAR using the ammonia provided by the HisH subunit. This Prochlorococcus marinus subsp. pastoris (strain CCMP1986 / NIES-2087 / MED4) protein is Imidazole glycerol phosphate synthase subunit HisF.